Here is a 161-residue protein sequence, read N- to C-terminus: Putative pre-16S rRNA nuclease (161 aa).

Residues 142 to 161 (AGSPPGALVPRNRVDPDRHA) are disordered.

Belongs to the YqgF nuclease family.

The protein localises to the cytoplasm. Functionally, could be a nuclease involved in processing of the 5'-end of pre-16S rRNA. This chain is Putative pre-16S rRNA nuclease, found in Clavibacter sepedonicus (Clavibacter michiganensis subsp. sepedonicus).